The chain runs to 175 residues: Shikimate kinase (175 aa).

Position 11–16 (11–16) interacts with ATP; the sequence is GAGKTT. A Mg(2+)-binding site is contributed by threonine 15. Substrate contacts are provided by aspartate 33, arginine 57, and glycine 79. Residue arginine 118 coordinates ATP. Arginine 140 contacts substrate.

The protein belongs to the shikimate kinase family. As to quaternary structure, monomer. Mg(2+) is required as a cofactor.

The protein resides in the cytoplasm. It carries out the reaction shikimate + ATP = 3-phosphoshikimate + ADP + H(+). It functions in the pathway metabolic intermediate biosynthesis; chorismate biosynthesis; chorismate from D-erythrose 4-phosphate and phosphoenolpyruvate: step 5/7. In terms of biological role, catalyzes the specific phosphorylation of the 3-hydroxyl group of shikimic acid using ATP as a cosubstrate. The sequence is that of Shikimate kinase from Phocaeicola vulgatus (strain ATCC 8482 / DSM 1447 / JCM 5826 / CCUG 4940 / NBRC 14291 / NCTC 11154) (Bacteroides vulgatus).